We begin with the raw amino-acid sequence, 797 residues long: Mitochondrial inner membrane m-AAA protease component AFG3L2 (797 aa).

The transit peptide at 1-38 (MAHRCLRLWGRGGCWPRGLQQLLVPGGVGPGEQPCLRT) directs the protein to the mitochondrion. A propeptide spans 39 to 66 (LYRFVTTQARASRNSLLTDIIAAYQRFC) (removed in mature form). Over 39–142 (LYRFVTTQAR…KGDIPWDDKD (104 aa)) the chain is Mitochondrial matrix. Residues 76–126 (YFPNGKNGKKASEPKEVMGEKKESKPAATTRSSGGGGGGGGKRGGKKDDSH) are disordered. Residues 85–100 (KASEPKEVMGEKKESK) are compositionally biased toward basic and acidic residues. The segment covering 108 to 117 (SGGGGGGGGK) has biased composition (gly residues). An N6-succinyllysine modification is found at Lys-117. Residues 143 to 163 (FRMFFLWTALFWGGVMFYLLL) traverse the membrane as a helical segment. Topologically, residues 164-250 (KRSGREITWK…VPVVYIAESD (87 aa)) are mitochondrial intermembrane. Residues 251–271 (GSFLLSMLPTVLIIAFLLYTI) traverse the membrane as a helical segment. Residues 272–797 (RRGPAGIGRT…EEPPGEKVAN (526 aa)) lie on the Mitochondrial matrix side of the membrane. Val-310, Ala-311, Thr-352, Gly-353, Lys-354, Thr-355, Leu-356, and His-490 together coordinate ATP. Residue His-574 participates in Zn(2+) binding. The active site involves Glu-575. His-578 and Asp-649 together coordinate Zn(2+). A disordered region spans residues 759–797 (FVEGTGSLDEDTSLPEGLKDWNKEREKEKEEPPGEKVAN). Residues 775–797 (GLKDWNKEREKEKEEPPGEKVAN) show a composition bias toward basic and acidic residues.

It in the N-terminal section; belongs to the AAA ATPase family. In the C-terminal section; belongs to the peptidase M41 family. In terms of assembly, homohexamer. Forms heterohexamers with SPG7. The m-AAA protease is either composed of homohexamers of AFG3L2 or heterohexamers of AFG3L2 and SPG7. Interacts with MAIP1. Interacts with DNAJC19. Interacts with PHB2. Zn(2+) serves as cofactor. In terms of processing, upon import into the mitochondrion, the N-terminal transit peptide is cleaved to generate an intermediate form which undergoes autocatalytic proteolytic processing to generate the proteolytically active mature form. As to expression, ubiquitous. Highly expressed in the cerebellar Purkinje cells.

It is found in the mitochondrion inner membrane. The catalysed reaction is ATP + H2O = ADP + phosphate + H(+). In terms of biological role, catalytic component of the m-AAA protease, a protease that plays a key role in proteostasis of inner mitochondrial membrane proteins, and which is essential for axonal and neuron development. AFG3L2 possesses both ATPase and protease activities: the ATPase activity is required to unfold substrates, threading them into the internal proteolytic cavity for hydrolysis into small peptide fragments. The m-AAA protease carries out quality control in the inner membrane of the mitochondria by mediating degradation of mistranslated or misfolded polypeptides. The m-AAA protease complex also promotes the processing and maturation of mitochondrial proteins, such as MRPL32/bL32m, PINK1 and SP7. Mediates protein maturation of the mitochondrial ribosomal subunit MRPL32/bL32m by catalyzing the cleavage of the presequence of MRPL32/bL32m prior to assembly into the mitochondrial ribosome. Required for SPG7 maturation into its active mature form after SPG7 cleavage by mitochondrial-processing peptidase (MPP). Required for the maturation of PINK1 into its 52kDa mature form after its cleavage by mitochondrial-processing peptidase (MPP). Acts as a regulator of calcium in neurons by mediating degradation of SMDT1/EMRE before its assembly with the uniporter complex, limiting the availability of SMDT1/EMRE for MCU assembly and promoting efficient assembly of gatekeeper subunits with MCU. Promotes the proteolytic degradation of GHITM upon hyperpolarization of mitochondria: progressive GHITM degradation leads to respiratory complex I degradation and broad reshaping of the mitochondrial proteome by AFG3L2. Also acts as a regulator of mitochondrial glutathione homeostasis by mediating cleavage and degradation of SLC25A39. SLC25A39 cleavage is prevented when SLC25A39 binds iron-sulfur. Involved in the regulation of OMA1-dependent processing of OPA1. May act by mediating processing of OMA1 precursor, participating in OMA1 maturation. In Homo sapiens (Human), this protein is Mitochondrial inner membrane m-AAA protease component AFG3L2.